The sequence spans 426 residues: Glutamate-1-semialdehyde 2,1-aminomutase (426 aa).

An N6-(pyridoxal phosphate)lysine modification is found at Lys-265.

The protein belongs to the class-III pyridoxal-phosphate-dependent aminotransferase family. HemL subfamily. As to quaternary structure, homodimer. Pyridoxal 5'-phosphate serves as cofactor.

It localises to the cytoplasm. The enzyme catalyses (S)-4-amino-5-oxopentanoate = 5-aminolevulinate. The protein operates within porphyrin-containing compound metabolism; protoporphyrin-IX biosynthesis; 5-aminolevulinate from L-glutamyl-tRNA(Glu): step 2/2. This chain is Glutamate-1-semialdehyde 2,1-aminomutase, found in Escherichia coli O127:H6 (strain E2348/69 / EPEC).